The primary structure comprises 155 residues: Endoribonuclease YbeY (155 aa).

Residues His-110, His-114, and His-120 each contribute to the Zn(2+) site.

Belongs to the endoribonuclease YbeY family. Requires Zn(2+) as cofactor.

Its subcellular location is the cytoplasm. Its function is as follows. Single strand-specific metallo-endoribonuclease involved in late-stage 70S ribosome quality control and in maturation of the 3' terminus of the 16S rRNA. This chain is Endoribonuclease YbeY, found in Deinococcus geothermalis (strain DSM 11300 / CIP 105573 / AG-3a).